The chain runs to 56 residues: Small ribosomal subunit protein uS14A (56 aa).

Zn(2+)-binding residues include C21 and C24. At S25 the chain carries Phosphoserine. Residues C39 and C42 each contribute to the Zn(2+) site.

It belongs to the universal ribosomal protein uS14 family. As to quaternary structure, component of the small ribosomal subunit (SSU). Mature yeast ribosomes consist of a small (40S) and a large (60S) subunit. The 40S small subunit contains 1 molecule of ribosomal RNA (18S rRNA) and 33 different proteins (encoded by 57 genes). The large 60S subunit contains 3 rRNA molecules (25S, 5.8S and 5S rRNA) and 46 different proteins (encoded by 81 genes). Requires Zn(2+) as cofactor.

It localises to the cytoplasm. In terms of biological role, component of the ribosome, a large ribonucleoprotein complex responsible for the synthesis of proteins in the cell. The small ribosomal subunit (SSU) binds messenger RNAs (mRNAs) and translates the encoded message by selecting cognate aminoacyl-transfer RNA (tRNA) molecules. The large subunit (LSU) contains the ribosomal catalytic site termed the peptidyl transferase center (PTC), which catalyzes the formation of peptide bonds, thereby polymerizing the amino acids delivered by tRNAs into a polypeptide chain. The nascent polypeptides leave the ribosome through a tunnel in the LSU and interact with protein factors that function in enzymatic processing, targeting, and the membrane insertion of nascent chains at the exit of the ribosomal tunnel. In Saccharomyces cerevisiae (strain ATCC 204508 / S288c) (Baker's yeast), this protein is Small ribosomal subunit protein uS14A.